We begin with the raw amino-acid sequence, 1116 residues long: Large proline-rich protein bag6-B (1116 aa).

The Ubiquitin-like domain occupies 7–82 (MDVTVKTLDS…HLVERAPPQT (76 aa)). 7 disordered regions span residues 76–114 (ERAP…RNGN), 170–221 (EGQP…PSEY), 329–385 (STTG…HPHP), 473–502 (PAAP…APGA), 533–589 (GGSS…GTDQ), 640–678 (VPVS…ESLP), and 1058–1080 (TGAK…EAQG). A compositionally biased stretch (low complexity) spans 79-100 (PPQTQTSTSGPSTSSSTSPSSS). A compositionally biased stretch (polar residues) spans 194–207 (RETLPQTTQNADGQ). The segment covering 208 to 219 (SNSTPTSHPSPS) has biased composition (low complexity). The segment covering 344–353 (GNATPSTNTS) has biased composition (polar residues). 3 stretches are compositionally biased toward low complexity: residues 482–502 (PGAA…APGA), 535–580 (SSTS…SVPS), and 641–652 (PVSTSPPQSASQ). The segment covering 653–672 (APPPPSSPAPPAHSAPPPAA) has biased composition (pro residues). Over residues 1068-1080 (CVKRELDNSEAQG) the composition is skewed to basic and acidic residues.

Component of the bag6/bat3 complex.

The protein resides in the cytoplasm. The protein localises to the cytosol. Its subcellular location is the nucleus. It localises to the secreted. It is found in the extracellular exosome. In terms of biological role, ATP-independent molecular chaperone preventing the aggregation of misfolded and hydrophobic patches-containing proteins. Functions as part of a cytosolic protein quality control complex, the bag6/bat3 complex, which maintains these client proteins in a soluble state and participates in their proper delivery to the endoplasmic reticulum or alternatively can promote their sorting to the proteasome where they undergo degradation. The bag6/bat3 complex is involved in the post-translational delivery of tail-anchored/type II transmembrane proteins to the endoplasmic reticulum membrane. Similarly, the bag6/bat3 complex also functions as a sorting platform for proteins of the secretory pathway that are mislocalized to the cytosol either delivering them to the proteasome for degradation or to the endoplasmic reticulum. The bag6/bat3 complex also plays a role in the endoplasmic reticulum-associated degradation (ERAD), a quality control mechanism that eliminates unwanted proteins of the endoplasmic reticulum through their retrotranslocation to the cytosol and their targeting to the proteasome. It maintains these retrotranslocated proteins in an unfolded yet soluble state condition in the cytosol to ensure their proper delivery to the proteasome. Also required for selective ubiquitin-mediated degradation of defective nascent chain polypeptides by the proteasome. Also involved in endoplasmic reticulum stress-induced pre-emptive quality control, a mechanism that selectively attenuates the translocation of newly synthesized proteins into the endoplasmic reticulum and reroutes them to the cytosol for proteasomal degradation. May ensure the proper degradation of these proteins and thereby protects the endoplasmic reticulum from protein overload upon stress. By stabilizing a large spectrum of proteins, may indirectly affect different biological processes including apoptosis. By controlling the steady-state expression of the IGF1R receptor, indirectly regulates the insulin-like growth factor receptor signaling pathway. When nuclear, may also act as a component of some chromatin regulator complex. This chain is Large proline-rich protein bag6-B, found in Xenopus laevis (African clawed frog).